A 354-amino-acid chain; its full sequence is Dihydroorotate dehydrogenase (quinone) (354 aa).

FMN-binding positions include alanine 61–lysine 65 and alanine 85. Lysine 65 provides a ligand contact to substrate. Substrate is bound at residue asparagine 110 to phenylalanine 114. Positions 139 and 170 each coordinate FMN. Position 170 (asparagine 170) interacts with substrate. The active-site Nucleophile is serine 173. Asparagine 175 contributes to the substrate binding site. Residues lysine 211 and threonine 239 each contribute to the FMN site. Asparagine 240 to threonine 241 serves as a coordination point for substrate. Residues glycine 261, glycine 290, and tyrosine 311–threonine 312 each bind FMN.

This sequence belongs to the dihydroorotate dehydrogenase family. Type 2 subfamily. In terms of assembly, monomer. FMN is required as a cofactor.

The protein resides in the cell membrane. The catalysed reaction is (S)-dihydroorotate + a quinone = orotate + a quinol. The protein operates within pyrimidine metabolism; UMP biosynthesis via de novo pathway; orotate from (S)-dihydroorotate (quinone route): step 1/1. In terms of biological role, catalyzes the conversion of dihydroorotate to orotate with quinone as electron acceptor. The polypeptide is Dihydroorotate dehydrogenase (quinone) (Cereibacter sphaeroides (strain KD131 / KCTC 12085) (Rhodobacter sphaeroides)).